Here is a 366-residue protein sequence, read N- to C-terminus: uncharacterized protein (366 aa).

The next 6 membrane-spanning stretches (helical) occupy residues 164 to 184, 188 to 208, 223 to 243, 256 to 276, 299 to 319, and 325 to 345; these read IPLI…FADI, IVVG…RKLL, VFPI…IYSL, FIGE…LILM, FFCL…GEYL, and FIMF…LSVI.

This sequence to A.fulgidus AF2058.

The protein resides in the cell membrane. This is an uncharacterized protein from Methanocaldococcus jannaschii (strain ATCC 43067 / DSM 2661 / JAL-1 / JCM 10045 / NBRC 100440) (Methanococcus jannaschii).